The sequence spans 445 residues: Phosphoglucosamine mutase (445 aa).

Ser102 (phosphoserine intermediate) is an active-site residue. 4 residues coordinate Mg(2+): Ser102, Asp241, Asp243, and Asp245. Ser102 carries the post-translational modification Phosphoserine.

Belongs to the phosphohexose mutase family. Mg(2+) is required as a cofactor. Activated by phosphorylation.

It catalyses the reaction alpha-D-glucosamine 1-phosphate = D-glucosamine 6-phosphate. Catalyzes the conversion of glucosamine-6-phosphate to glucosamine-1-phosphate. This Zymomonas mobilis subsp. mobilis (strain ATCC 31821 / ZM4 / CP4) protein is Phosphoglucosamine mutase.